We begin with the raw amino-acid sequence, 373 residues long: Chaperone protein DnaJ (373 aa).

In terms of domain architecture, J spans 4–68 (DFYEILGVSR…QARANYDRFG (65 aa)). The segment at 132 to 214 (GGEKEIRINH…CGGQGHIQVS (83 aa)) adopts a CR-type zinc-finger fold. Residues cysteine 145, cysteine 148, cysteine 162, cysteine 165, cysteine 188, cysteine 191, cysteine 202, and cysteine 205 each contribute to the Zn(2+) site. CXXCXGXG motif repeat units lie at residues 145–152 (CKTCQGTG), 162–169 (CSTCGGVG), 188–195 (CPTCGGSG), and 202–209 (CESCGGQG).

It belongs to the DnaJ family. In terms of assembly, homodimer. Zn(2+) is required as a cofactor.

The protein resides in the cytoplasm. In terms of biological role, participates actively in the response to hyperosmotic and heat shock by preventing the aggregation of stress-denatured proteins and by disaggregating proteins, also in an autonomous, DnaK-independent fashion. Unfolded proteins bind initially to DnaJ; upon interaction with the DnaJ-bound protein, DnaK hydrolyzes its bound ATP, resulting in the formation of a stable complex. GrpE releases ADP from DnaK; ATP binding to DnaK triggers the release of the substrate protein, thus completing the reaction cycle. Several rounds of ATP-dependent interactions between DnaJ, DnaK and GrpE are required for fully efficient folding. Also involved, together with DnaK and GrpE, in the DNA replication of plasmids through activation of initiation proteins. The chain is Chaperone protein DnaJ from Thermosynechococcus vestitus (strain NIES-2133 / IAM M-273 / BP-1).